Reading from the N-terminus, the 244-residue chain is Small ribosomal subunit protein eS4 (244 aa).

Residues 43–106 (LPLLLVVRDI…DENYLVLFDE (64 aa)) enclose the S4 RNA-binding domain.

It belongs to the eukaryotic ribosomal protein eS4 family.

In Methanococcus maripaludis (strain C6 / ATCC BAA-1332), this protein is Small ribosomal subunit protein eS4.